Consider the following 551-residue polypeptide: Membrane protein insertase YidC (551 aa).

Residues 3-23 (ANHIRILLLVTIAIMFISLMG) traverse the membrane as a helical segment. Residues 33–47 (NTKQQTSATQNNSHY) are compositionally biased toward polar residues. Residues 33-58 (NTKQQTSATQNNSHYDNADSSTNTDV) form a disordered region. Transmembrane regions (helical) follow at residues 361 to 381 (LVGN…LIFY), 431 to 451 (LSGC…YWVL), and 504 to 524 (VMMF…SGLV).

The protein belongs to the OXA1/ALB3/YidC family. Type 1 subfamily. As to quaternary structure, interacts with the Sec translocase complex via SecD. Specifically interacts with transmembrane segments of nascent integral membrane proteins during membrane integration.

Its subcellular location is the cell inner membrane. Required for the insertion and/or proper folding and/or complex formation of integral membrane proteins into the membrane. Involved in integration of membrane proteins that insert both dependently and independently of the Sec translocase complex, as well as at least some lipoproteins. Aids folding of multispanning membrane proteins. This chain is Membrane protein insertase YidC, found in Francisella tularensis subsp. novicida (strain U112).